Consider the following 1034-residue polypeptide: Error-prone DNA polymerase (1034 aa).

This sequence belongs to the DNA polymerase type-C family. DnaE2 subfamily.

Its subcellular location is the cytoplasm. It carries out the reaction DNA(n) + a 2'-deoxyribonucleoside 5'-triphosphate = DNA(n+1) + diphosphate. Its function is as follows. DNA polymerase involved in damage-induced mutagenesis and translesion synthesis (TLS). It is not the major replicative DNA polymerase. This chain is Error-prone DNA polymerase, found in Pseudomonas fluorescens (strain ATCC BAA-477 / NRRL B-23932 / Pf-5).